The sequence spans 384 residues: MMKRIPAILVLEDGAYYKGWSFQQDKQEITIGEVVFNTGMTGYQEIITDPSYFHQIVAFTYPEIGNTGINNQDIESHSISIKGLIAKNICKISSSWREQQSLVKYLSSNNIPFIFGIDTRSLTQYLRQFGTMNGCISTDNLNHSYLKQKICEIPSMQGLDLIPHVTTRNVYPWDEKSFPNWYLTDNIRVHRVIQLKVIVIDFGVKLNILRRLATLGCQITVVPAHTPLKDILAYQPDGILLSNGPGDPSAVHYGIQTVTNLLDYNVPIFGICMGHQILNLALKAKTFKLKFGHRGINHPSGLNQQVEITSQNHGFAVELTSVFESPVRVTHFNLNDTTIAGTGHNQSPYFSVQYHPESSPGPHDADYLFESFIEIMTKSKNKVS.

Residues 1-192 (MMKRIPAILV…LTDNIRVHRV (192 aa)) are CPSase. Serine 51, glycine 244, and glycine 246 together coordinate L-glutamine. One can recognise a Glutamine amidotransferase type-1 domain in the interval 196–382 (KVIVIDFGVK…IEIMTKSKNK (187 aa)). The Nucleophile role is filled by cysteine 272. 5 residues coordinate L-glutamine: methionine 273, glutamine 276, asparagine 312, glycine 314, and phenylalanine 315. Catalysis depends on residues histidine 355 and glutamate 357.

It belongs to the CarA family. Composed of two chains; the small (or glutamine) chain promotes the hydrolysis of glutamine to ammonia, which is used by the large (or ammonia) chain to synthesize carbamoyl phosphate. Tetramer of heterodimers (alpha,beta)4.

The protein localises to the plastid. The protein resides in the chloroplast. It catalyses the reaction hydrogencarbonate + L-glutamine + 2 ATP + H2O = carbamoyl phosphate + L-glutamate + 2 ADP + phosphate + 2 H(+). The enzyme catalyses L-glutamine + H2O = L-glutamate + NH4(+). Its pathway is amino-acid biosynthesis; L-arginine biosynthesis; carbamoyl phosphate from bicarbonate: step 1/1. It functions in the pathway pyrimidine metabolism; UMP biosynthesis via de novo pathway; (S)-dihydroorotate from bicarbonate: step 1/3. In terms of biological role, small subunit of the glutamine-dependent carbamoyl phosphate synthetase (CPSase). CPSase catalyzes the formation of carbamoyl phosphate from the ammonia moiety of glutamine, carbonate, and phosphate donated by ATP, constituting the first step of 2 biosynthetic pathways, one leading to arginine and/or urea and the other to pyrimidine nucleotides. The small subunit (glutamine amidotransferase) binds and cleaves glutamine to supply the large subunit with the substrate ammonia. In Pyropia yezoensis (Susabi-nori), this protein is Carbamoyl phosphate synthase small chain.